Reading from the N-terminus, the 443-residue chain is Tol-Pal system protein TolB (443 aa).

The signal sequence occupies residues methionine 1–alanine 33.

It belongs to the TolB family. As to quaternary structure, the Tol-Pal system is composed of five core proteins: the inner membrane proteins TolA, TolQ and TolR, the periplasmic protein TolB and the outer membrane protein Pal. They form a network linking the inner and outer membranes and the peptidoglycan layer.

Its subcellular location is the periplasm. Part of the Tol-Pal system, which plays a role in outer membrane invagination during cell division and is important for maintaining outer membrane integrity. This chain is Tol-Pal system protein TolB, found in Brucella ovis (strain ATCC 25840 / 63/290 / NCTC 10512).